The sequence spans 701 residues: Glycine--tRNA ligase beta subunit (701 aa).

This sequence belongs to the class-II aminoacyl-tRNA synthetase family. Tetramer of two alpha and two beta subunits.

The protein resides in the cytoplasm. The enzyme catalyses tRNA(Gly) + glycine + ATP = glycyl-tRNA(Gly) + AMP + diphosphate. In Anaeromyxobacter dehalogenans (strain 2CP-C), this protein is Glycine--tRNA ligase beta subunit.